Reading from the N-terminus, the 27-residue chain is Protein YqiM (27 aa).

The chain is Protein YqiM from Escherichia coli (strain K12).